A 618-amino-acid polypeptide reads, in one-letter code: 1-deoxy-D-xylulose-5-phosphate synthase (618 aa).

Residues H76 and 117-119 each bind thiamine diphosphate; that span reads GHS. D148 serves as a coordination point for Mg(2+). Residues 149–150, N177, Y284, and E366 contribute to the thiamine diphosphate site; that span reads GA. A Mg(2+)-binding site is contributed by N177.

It belongs to the transketolase family. DXPS subfamily. In terms of assembly, homodimer. Requires Mg(2+) as cofactor. It depends on thiamine diphosphate as a cofactor.

It catalyses the reaction D-glyceraldehyde 3-phosphate + pyruvate + H(+) = 1-deoxy-D-xylulose 5-phosphate + CO2. It functions in the pathway metabolic intermediate biosynthesis; 1-deoxy-D-xylulose 5-phosphate biosynthesis; 1-deoxy-D-xylulose 5-phosphate from D-glyceraldehyde 3-phosphate and pyruvate: step 1/1. Catalyzes the acyloin condensation reaction between C atoms 2 and 3 of pyruvate and glyceraldehyde 3-phosphate to yield 1-deoxy-D-xylulose-5-phosphate (DXP). The sequence is that of 1-deoxy-D-xylulose-5-phosphate synthase from Dechloromonas aromatica (strain RCB).